The chain runs to 277 residues: Shikimate dehydrogenase (NADP(+)) (277 aa).

Shikimate contacts are provided by residues 18 to 20 (SKS) and T65. K69 serves as the catalytic Proton acceptor. E81 provides a ligand contact to NADP(+). Shikimate contacts are provided by N90 and D106. NADP(+) is bound by residues 130 to 134 (GAGGA), 154 to 159 (NRTFSK), and M217. Y219 lines the shikimate pocket. An NADP(+)-binding site is contributed by G241.

It belongs to the shikimate dehydrogenase family. In terms of assembly, homodimer.

The catalysed reaction is shikimate + NADP(+) = 3-dehydroshikimate + NADPH + H(+). It functions in the pathway metabolic intermediate biosynthesis; chorismate biosynthesis; chorismate from D-erythrose 4-phosphate and phosphoenolpyruvate: step 4/7. In terms of biological role, involved in the biosynthesis of the chorismate, which leads to the biosynthesis of aromatic amino acids. Catalyzes the reversible NADPH linked reduction of 3-dehydroshikimate (DHSA) to yield shikimate (SA). The polypeptide is Shikimate dehydrogenase (NADP(+)) (Vibrio campbellii (strain ATCC BAA-1116)).